The following is a 493-amino-acid chain: Galactose-1-phosphate uridylyltransferase (493 aa).

This sequence belongs to the galactose-1-phosphate uridylyltransferase type 2 family.

It localises to the cytoplasm. The catalysed reaction is alpha-D-galactose 1-phosphate + UDP-alpha-D-glucose = alpha-D-glucose 1-phosphate + UDP-alpha-D-galactose. It functions in the pathway carbohydrate metabolism; galactose metabolism. This is Galactose-1-phosphate uridylyltransferase from Lactococcus lactis subsp. cremoris (strain SK11).